A 652-amino-acid chain; its full sequence is Acetyl-coenzyme A synthetase (652 aa).

CoA is bound by residues 191 to 194 (RAGR), threonine 311, and asparagine 335. Residues 387–389 (GEP), 411–416 (DTWWQT), aspartate 500, and arginine 515 contribute to the ATP site. Serine 523 is a CoA binding site. An ATP-binding site is contributed by arginine 526. The Mg(2+) site is built by valine 537, histidine 539, and isoleucine 542. Residue arginine 584 coordinates CoA. At lysine 609 the chain carries N6-acetyllysine.

Belongs to the ATP-dependent AMP-binding enzyme family. The cofactor is Mg(2+). Post-translationally, acetylated. Deacetylation by the SIR2-homolog deacetylase activates the enzyme.

The catalysed reaction is acetate + ATP + CoA = acetyl-CoA + AMP + diphosphate. Its function is as follows. Catalyzes the conversion of acetate into acetyl-CoA (AcCoA), an essential intermediate at the junction of anabolic and catabolic pathways. Acs undergoes a two-step reaction. In the first half reaction, Acs combines acetate with ATP to form acetyl-adenylate (AcAMP) intermediate. In the second half reaction, it can then transfer the acetyl group from AcAMP to the sulfhydryl group of CoA, forming the product AcCoA. Functionally, enables the cell to use acetate during aerobic growth to generate energy via the TCA cycle, and biosynthetic compounds via the glyoxylate shunt. Acetylates CheY, the response regulator involved in flagellar movement and chemotaxis. This is Acetyl-coenzyme A synthetase from Serratia proteamaculans (strain 568).